Reading from the N-terminus, the 301-residue chain is Probable alpha-L-glutamate ligase (301 aa).

The 184-residue stretch at Leu104–Glu287 folds into the ATP-grasp domain. ATP-binding positions include Lys141, Glu178–Phe179, Asp187, and Arg211–Asn213. Residues Asp248, Glu260, and Asn262 each coordinate Mg(2+). Positions 248, 260, and 262 each coordinate Mn(2+).

The protein belongs to the RimK family. Requires Mg(2+) as cofactor. The cofactor is Mn(2+).

This chain is Probable alpha-L-glutamate ligase, found in Nitrosococcus oceani (strain ATCC 19707 / BCRC 17464 / JCM 30415 / NCIMB 11848 / C-107).